The chain runs to 342 residues: tRNA N6-adenosine threonylcarbamoyltransferase (342 aa).

Fe cation-binding residues include His111 and His115. Substrate contacts are provided by residues 134–138 (LVSGG), Asp167, Gly180, and Asn272. Fe cation is bound at residue Asp300.

The protein belongs to the KAE1 / TsaD family. Requires Fe(2+) as cofactor.

It is found in the cytoplasm. It carries out the reaction L-threonylcarbamoyladenylate + adenosine(37) in tRNA = N(6)-L-threonylcarbamoyladenosine(37) in tRNA + AMP + H(+). Functionally, required for the formation of a threonylcarbamoyl group on adenosine at position 37 (t(6)A37) in tRNAs that read codons beginning with adenine. Is involved in the transfer of the threonylcarbamoyl moiety of threonylcarbamoyl-AMP (TC-AMP) to the N6 group of A37, together with TsaE and TsaB. TsaD likely plays a direct catalytic role in this reaction. The chain is tRNA N6-adenosine threonylcarbamoyltransferase from Aromatoleum aromaticum (strain DSM 19018 / LMG 30748 / EbN1) (Azoarcus sp. (strain EbN1)).